We begin with the raw amino-acid sequence, 395 residues long: uncharacterized protein (395 aa).

Disordered regions lie at residues 1–121 (MLLP…TANS), 136–187 (MRMK…LDRN), 308–335 (QNNE…SKDE), and 365–395 (IQKF…NEGD). Basic and acidic residues predominate over residues 13–28 (PKGEAKSLVARERKSQ). Positions 64–73 (KSAKLRRKKS) are enriched in basic residues. Positions 97-111 (SIEKKKEEMTSKLPE) are enriched in basic and acidic residues. Over residues 144–164 (TSRMATKSDSSLETMPESSHN) the composition is skewed to polar residues. Over residues 170–179 (KSRKSQRTRG) the composition is skewed to basic residues. Basic residues predominate over residues 365–377 (IQKFRKKYQKQLK). Residues 378 to 395 (KSQEEKKDDTKTAKNEGD) are compositionally biased toward basic and acidic residues.

This is an uncharacterized protein from Caenorhabditis elegans.